We begin with the raw amino-acid sequence, 526 residues long: Arylsulfatase G (526 aa).

An N-terminal signal peptide occupies residues 1-16 (MGWLFLKVLLVGMVFS). Residues D44, D45, and C84 each contribute to the Ca(2+) site. C84 functions as the Nucleophile in the catalytic mechanism. C84 bears the 3-oxoalanine (Cys) mark. The N-linked (GlcNAc...) asparagine glycan is linked to N117. K137 is a substrate binding site. H139 is an active-site residue. S162 lines the substrate pocket. N215 carries N-linked (GlcNAc...) asparagine glycosylation. H251 contributes to the substrate binding site. Positions 302 and 303 each coordinate Ca(2+). N-linked (GlcNAc...) asparagine glycosylation is found at N356 and N497.

It belongs to the sulfatase family. The cofactor is Ca(2+). N-glycosylated with both high mannose and complex type sugars. Post-translationally, the conversion to 3-oxoalanine (also known as C-formylglycine, FGly), of a serine or cysteine residue in prokaryotes and of a cysteine residue in eukaryotes, is critical for catalytic activity. In terms of processing, 63-kDa precursor undergoes proteolytic processing in two steps, yielding two fragments in the first step (apparent molecular masses of 44 and 18 kDa). In the second step, the 44-kDa fragment is processed further to the 34- and 10-kDa chains. The 10-kDa chain is a cleavage product of the 44-kDa fragment but linked to the 18-kDa chain through a disulfide bridge.

The protein localises to the lysosome. It carries out the reaction an aryl sulfate + H2O = a phenol + sulfate + H(+). The enzyme catalyses Hydrolysis of the 3-sulfate groups of the N-sulfo-D-glucosamine 3-O-sulfate units of heparin.. In terms of biological role, displays arylsulfatase activity at acidic pH towards the artificial substrate p-nitrocatechol sulfate. Catalyzes the hydrolysis of the 3-sulfate groups of the N-sulfo-D-glucosamine 3-O-sulfate units of heparin. This Rattus norvegicus (Rat) protein is Arylsulfatase G (Arsg).